A 202-amino-acid chain; its full sequence is Arenicin-2 (202 aa).

The signal sequence occupies residues 1-25 (MTSTQSVAVYATLILAIFCFNDIHC). A propeptide spanning residues 26–181 (DPIAEARAAA…SGDNNEPEKR (156 aa)) is cleaved from the precursor. The BRICHOS domain occupies 73–168 (GDGVEGSVMV…ACQGKSVYWL (96 aa)). 2 disulfides stabilise this stretch: Cys-100–Cys-160 and Cys-184–Cys-201.

Functionally, has antimicrobial activity against the Gram-negative bacteria E.coli and P.mirabilis, the Gram-positive bacterium L.monocytogenes and the yeast C.albicans. This chain is Arenicin-2, found in Arenicola marina (Lugworm).